We begin with the raw amino-acid sequence, 100 residues long: Replication restart protein PriB (100 aa).

The region spanning 1-99 (MGFNNLVSLA…LRIQNIQEYK (99 aa)) is the SSB domain.

Belongs to the PriB family. In terms of assembly, homodimer. Interacts with PriA and DnaT. Component of the replication restart primosome. Primosome assembly occurs via a 'hand-off' mechanism. PriA binds to replication forks, subsequently PriB then DnaT bind; DnaT then displaces ssDNA to generate the helicase loading substrate.

In terms of biological role, involved in the restart of stalled replication forks, which reloads the replicative helicase on sites other than the origin of replication; the PriA-PriB pathway is the major replication restart pathway. During primosome assembly it facilitates complex formation between PriA and DnaT on DNA; stabilizes PriA on DNA. Stimulates the DNA unwinding activity of PriA helicase. This Neisseria meningitidis serogroup A / serotype 4A (strain DSM 15465 / Z2491) protein is Replication restart protein PriB.